We begin with the raw amino-acid sequence, 159 residues long: Neurotrophin-3 (159 aa).

Residues 1-3 (IQS) form the signal peptide. Residues 4-115 (TSMDQGILTE…VQNRTSRRKR (112 aa)) constitute a propeptide that is removed on maturation. The interval 91–129 (APLEPPPLYLTEEPLVQNRTSRRKREGKRHRGEYSVCDS) is disordered. The N-linked (GlcNAc...) asparagine glycan is linked to N108. Residues 110 to 121 (TSRRKREGKRHR) are compositionally biased toward basic residues.

It belongs to the NGF-beta family.

The protein resides in the secreted. Seems to promote the survival of visceral and proprioceptive sensory neurons. This is Neurotrophin-3 (NTF3) from Candoia carinata (Papuan tree boa).